Here is a 697-residue protein sequence, read N- to C-terminus: Elongation factor G (697 aa).

The tr-type G domain maps to 8 to 283; the sequence is EHIRNIGICA…AVVDFLPSPT (276 aa). Residues 17-24, 81-85, and 135-138 contribute to the GTP site; these read AHIDAGKT, DTPGH, and NKMD.

The protein belongs to the TRAFAC class translation factor GTPase superfamily. Classic translation factor GTPase family. EF-G/EF-2 subfamily.

The protein resides in the cytoplasm. Catalyzes the GTP-dependent ribosomal translocation step during translation elongation. During this step, the ribosome changes from the pre-translocational (PRE) to the post-translocational (POST) state as the newly formed A-site-bound peptidyl-tRNA and P-site-bound deacylated tRNA move to the P and E sites, respectively. Catalyzes the coordinated movement of the two tRNA molecules, the mRNA and conformational changes in the ribosome. The polypeptide is Elongation factor G (Rickettsia massiliae (strain Mtu5)).